Reading from the N-terminus, the 74-residue chain is M-myrmeciitoxin-Mb1a (74 aa).

Residues 1 to 26 (MKLSCLLLTLAIIVVLTIVHAPNVEA) form the signal peptide. Positions 27–50 (KALADPESDAVGFADAVGEADPNA) are excised as a propeptide. The residue at position 73 (glutamine 73) is a Glutamine amide.

Belongs to the formicidae venom precursor-01 superfamily. Ant pilosulin family. In terms of tissue distribution, expressed by the venom gland.

It localises to the secreted. Functionally, shows moderate activity against E.coli and S.aureus (MIC&lt;25 uM), slight activity against B.subtilis (MIC&lt;50 uM), and no activity against L.garvieae, P.aeruginosa, C.albicans, and S.cerevisiae. Has no hemolytic nor cytolytic activity. Causes an IgE-independent histamine release. The protein is M-myrmeciitoxin-Mb1a of Myrmecia banksi (Jack jumper ant).